The following is a 71-amino-acid chain: Long neurotoxin Tx-NM3-1 (71 aa).

5 disulfide bridges follow: cysteine 3-cysteine 20, cysteine 14-cysteine 41, cysteine 26-cysteine 30, cysteine 45-cysteine 56, and cysteine 57-cysteine 62.

Expressed by the venom gland.

It is found in the secreted. In terms of biological role, binds with high affinity to muscular (alpha-1-beta-1-gamma-delta/CHRNA1-CHRNB1-CHRNG-CHRND) and neuronal (alpha-7/CHRNA7) nicotinic acetylcholine receptor (nAChR) and inhibits acetylcholine from binding to the receptor, thereby impairing neuromuscular and neuronal transmission. Ranges of nAChR inhibition are in nanomolar (competitive binding with alpha-bungarotoxin gives Ki=1.66 nM on muscle nAChR and Ki=4.84 nM on alpha-7). Also shows moderate inhibition on GABA(A) alpha-1-beta-3-gamma-2 receptor (GABRA1-GABRB3-GABRG2) (IC(50)=0.68 uM), and a lower inhibition on alpha-1-beta-2-gamma-2 (GABRA1-GABRB2-GABRG2) and alpha-3-beta-2-gamma-2 (GABRA3-GABRB2-GABRG2). The protein is Long neurotoxin Tx-NM3-1 of Naja melanoleuca (Forest cobra).